The sequence spans 63 residues: SERF-like protein C1705.02 (63 aa).

The segment covering 1–13 has biased composition (basic and acidic residues); that stretch reads MSRGNQRDVDRAR. Residues 1 to 63 are disordered; that stretch reads MSRGNQRDVD…EANGGSKGKK (63 aa). The span at 14 to 24 shows a compositional bias: basic residues; that stretch reads NLKKSQASKKK. Positions 25–35 are enriched in basic and acidic residues; the sequence is QAGDPTKRLEA.

This sequence belongs to the SERF family.

Its subcellular location is the cytoplasm. The protein localises to the nucleus. The protein resides in the nucleolus. This chain is SERF-like protein C1705.02, found in Schizosaccharomyces pombe (strain 972 / ATCC 24843) (Fission yeast).